The sequence spans 116 residues: Transcriptional regulator WhiB4 (116 aa).

In terms of domain architecture, 4Fe-4S Wbl-type spans 36–92; it reads LCRATDPDELFVRGAAQRKAAVICRHCPVMQECGADALDNKVEFGVWGGMTERQRRA. 4 residues coordinate [4Fe-4S] cluster: Cys-37, Cys-59, Cys-62, and Cys-68.

It belongs to the WhiB family. Requires [4Fe-4S] cluster as cofactor. The Fe-S cluster can be nitrosylated by nitric oxide (NO). Post-translationally, upon Fe-S cluster removal intramolecular disulfide bonds are formed.

Its subcellular location is the cytoplasm. In terms of biological role, acts as a transcriptional regulator. Probably redox-responsive. The apo- but not holo-form probably binds DNA. Plays a role in lipooligosaccharide (LOS) biosynthesis by regulating LOS gene expression. This Mycobacterium marinum (strain ATCC BAA-535 / M) protein is Transcriptional regulator WhiB4 (whiB4).